We begin with the raw amino-acid sequence, 240 residues long: Probable ATP synthase 24 kDa subunit, mitochondrial (240 aa).

Residues M1–F32 constitute a mitochondrion transit peptide. 2 stretches are compositionally biased toward basic and acidic residues: residues A210–E222 and P229–I240. The interval A210–I240 is disordered.

It is found in the mitochondrion. The protein resides in the mitochondrion inner membrane. Its function is as follows. Mitochondrial membrane ATP synthase (F(1)F(0) ATP synthase or Complex V) produces ATP from ADP in the presence of a proton gradient across the membrane which is generated by electron transport complexes of the respiratory chain. F-type ATPases consist of two structural domains, F(1) - containing the extramembraneous catalytic core and F(0) - containing the membrane proton channel, linked together by a central stalk and a peripheral stalk. During catalysis, ATP synthesis in the catalytic domain of F(1) is coupled via a rotary mechanism of the central stalk subunits to proton translocation. Part of the complex F(0) domain. The protein is Probable ATP synthase 24 kDa subunit, mitochondrial of Arabidopsis thaliana (Mouse-ear cress).